A 118-amino-acid chain; its full sequence is BolA-like protein 3 (118 aa).

The protein belongs to the BolA/IbaG family. In terms of assembly, interacts with NFU1.

It localises to the mitochondrion matrix. Acts as a mitochondrial iron-sulfur (Fe-S) cluster assembly factor that facilitates [4Fe-4S] cluster insertion into a subset of mitochondrial proteins such as lipoyl synthase (LS) and succinate dehydrogenase (SDH). Required during the last step of iron-sulfur protein assembly when the iron-sulfur cluster is inserted into the target protein. Acts together with NFU1, later than BOL1 and GRX5 in the [4Fe-4S] cluster insertion process. Not required for [2Fe-2S] cluster insertion into mitochondrial proteins. The chain is BolA-like protein 3 from Saccharomyces cerevisiae (strain ATCC 204508 / S288c) (Baker's yeast).